Here is a 476-residue protein sequence, read N- to C-terminus: Adenosylhomocysteinase (476 aa).

Positions 67, 142, and 202 each coordinate substrate. An NAD(+)-binding site is contributed by 203–205 (TTT). Substrate contacts are provided by Lys232 and Asp236. NAD(+) is bound by residues Asn237, 266-271 (GYGDVG), Glu289, Asn324, 345-347 (IGH), and Asn390.

It belongs to the adenosylhomocysteinase family. The cofactor is NAD(+).

Its subcellular location is the cytoplasm. It catalyses the reaction S-adenosyl-L-homocysteine + H2O = L-homocysteine + adenosine. The protein operates within amino-acid biosynthesis; L-homocysteine biosynthesis; L-homocysteine from S-adenosyl-L-homocysteine: step 1/1. Its function is as follows. May play a key role in the regulation of the intracellular concentration of adenosylhomocysteine. In Prochlorococcus marinus (strain MIT 9211), this protein is Adenosylhomocysteinase.